We begin with the raw amino-acid sequence, 85 residues long: MANIKSAIKRAKLSEERRAHNASIKSDMRSAVKTVEALVTNNDLENAKEAFKTASKKLDKAARKGLIHQNAAARQKSRLAKQVNA.

The interval 1 to 25 (MANIKSAIKRAKLSEERRAHNASIK) is disordered.

Belongs to the bacterial ribosomal protein bS20 family.

Functionally, binds directly to 16S ribosomal RNA. The chain is Small ribosomal subunit protein bS20 from Bacillus anthracis (strain A0248).